Here is a 239-residue protein sequence, read N- to C-terminus: Metallo-beta-lactamase IND-1 (239 aa).

The N-terminal stretch at 1–20 (MKKSIRFFIVSILLSPFASA) is a signal peptide. Positions 96, 98, 100, 159, and 178 each coordinate Zn(2+). Position 181 (Lys181) interacts with a beta-lactam. His220 contacts Zn(2+).

It belongs to the metallo-beta-lactamase superfamily. Class-B beta-lactamase family. As to quaternary structure, monomer. The cofactor is Zn(2+).

The protein localises to the periplasm. The enzyme catalyses a beta-lactam + H2O = a substituted beta-amino acid. With respect to regulation, inhibited by chelating agents such as EDTA. Not susceptible to inactivation by the beta-lactamase-blocking agent clavulanic acid. In terms of biological role, class B beta-lactamase which confers resistance to the beta-lactam antibiotics, including penicillins, cephalosporins and carbapenems. Acts via hydrolysis of the beta-lactam ring. Has penicillin-, cephalosporin- and carbapenem-hydrolyzing activities. The polypeptide is Metallo-beta-lactamase IND-1 (Chryseobacterium indologenes (Flavobacterium indologenes)).